The primary structure comprises 158 residues: 6,7-dimethyl-8-ribityllumazine synthase (158 aa).

5-amino-6-(D-ribitylamino)uracil-binding positions include F24, 58-60 (AFE), and 82-84 (AVI). A (2S)-2-hydroxy-3-oxobutyl phosphate-binding site is contributed by 87–88 (GT). The active-site Proton donor is H90. Residue F115 coordinates 5-amino-6-(D-ribitylamino)uracil. R129 is a (2S)-2-hydroxy-3-oxobutyl phosphate binding site.

It belongs to the DMRL synthase family. Forms an icosahedral capsid composed of 60 subunits, arranged as a dodecamer of pentamers.

The catalysed reaction is (2S)-2-hydroxy-3-oxobutyl phosphate + 5-amino-6-(D-ribitylamino)uracil = 6,7-dimethyl-8-(1-D-ribityl)lumazine + phosphate + 2 H2O + H(+). It participates in cofactor biosynthesis; riboflavin biosynthesis; riboflavin from 2-hydroxy-3-oxobutyl phosphate and 5-amino-6-(D-ribitylamino)uracil: step 1/2. Functionally, catalyzes the formation of 6,7-dimethyl-8-ribityllumazine by condensation of 5-amino-6-(D-ribitylamino)uracil with 3,4-dihydroxy-2-butanone 4-phosphate. This is the penultimate step in the biosynthesis of riboflavin. In Ectopseudomonas mendocina (strain ymp) (Pseudomonas mendocina), this protein is 6,7-dimethyl-8-ribityllumazine synthase.